The following is a 330-amino-acid chain: Ribosomal RNA small subunit methyltransferase C (330 aa).

This sequence belongs to the methyltransferase superfamily. RsmC family. In terms of assembly, monomer.

It is found in the cytoplasm. It carries out the reaction guanosine(1207) in 16S rRNA + S-adenosyl-L-methionine = N(2)-methylguanosine(1207) in 16S rRNA + S-adenosyl-L-homocysteine + H(+). Specifically methylates the guanine in position 1207 of 16S rRNA in the 30S particle. The sequence is that of Ribosomal RNA small subunit methyltransferase C from Haemophilus influenzae (strain ATCC 51907 / DSM 11121 / KW20 / Rd).